The following is a 498-amino-acid chain: ATP synthase subunit beta, chloroplastic (498 aa).

172 to 179 (GGAGVGKT) lines the ATP pocket.

It belongs to the ATPase alpha/beta chains family. As to quaternary structure, F-type ATPases have 2 components, CF(1) - the catalytic core - and CF(0) - the membrane proton channel. CF(1) has five subunits: alpha(3), beta(3), gamma(1), delta(1), epsilon(1). CF(0) has four main subunits: a(1), b(1), b'(1) and c(9-12).

It is found in the plastid. The protein localises to the chloroplast thylakoid membrane. The enzyme catalyses ATP + H2O + 4 H(+)(in) = ADP + phosphate + 5 H(+)(out). Produces ATP from ADP in the presence of a proton gradient across the membrane. The catalytic sites are hosted primarily by the beta subunits. In Phoenix dactylifera (Date palm), this protein is ATP synthase subunit beta, chloroplastic.